The sequence spans 352 residues: DNA polymerase IV (352 aa).

The UmuC domain occupies 6–187 (IIHIDADCFY…VPVKFISGIG (182 aa)). Positions 10 and 105 each coordinate Mg(2+). Residue Glu106 is part of the active site.

Belongs to the DNA polymerase type-Y family. Monomer. Mg(2+) is required as a cofactor.

The protein resides in the cytoplasm. It carries out the reaction DNA(n) + a 2'-deoxyribonucleoside 5'-triphosphate = DNA(n+1) + diphosphate. Functionally, poorly processive, error-prone DNA polymerase involved in untargeted mutagenesis. Copies undamaged DNA at stalled replication forks, which arise in vivo from mismatched or misaligned primer ends. These misaligned primers can be extended by PolIV. Exhibits no 3'-5' exonuclease (proofreading) activity. May be involved in translesional synthesis, in conjunction with the beta clamp from PolIII. The polypeptide is DNA polymerase IV (Marinomonas sp. (strain MWYL1)).